A 584-amino-acid polypeptide reads, in one-letter code: Lamin-B1 (584 aa).

Positions 1–22 are disordered; that stretch reads MAAAVAPLSPQPRGAAASAALS. The interval 2-33 is head; that stretch reads AAAVAPLSPQPRGAAASAALSPTRISRLQEKE. Residue Ser-22 is modified to Phosphoserine. Residues 31–387 enclose the IF rod domain; sequence EKEELRQLND…KLLESEEERL (357 aa). A coil 1A region spans residues 34-70; the sequence is ELRQLNDRLAVYIDKVRSLETENSALQRRVSEREQVC. The segment at 81 to 218 is coil 1B; sequence FETELADARK…NVYEEEIKET (138 aa). Positions 243-385 are coil 2; it reads QALKEIREQH…YRKLLESEEE (143 aa). Residues 386–584 form a tail region; the sequence is RLRLSPGPSS…RKPERSCVVM (199 aa). 2 disordered regions span residues 388-431 and 548-584; these read RLSP…SVSI and TVNE…CVVM. Residues 394–408 are compositionally biased toward low complexity; sequence SSRVTVSRASSSRSV. The Nuclear localization signal motif lies at 414-419; the sequence is KRKRID. Positions 429–545 constitute an LTD domain; sequence VSISHSASAT…EEVAQRSTVF (117 aa). Residues 551–565 show a composition bias toward acidic residues; that stretch reads EGEEEEEEGEEEILE. Basic and acidic residues predominate over residues 575-584; sequence RKPERSCVVM. Cysteine methyl ester is present on Cys-581. Residue Cys-581 is the site of S-farnesyl cysteine attachment. The propeptide at 582–584 is removed in mature form; sequence VVM.

This sequence belongs to the intermediate filament family. As to quaternary structure, homodimer. Lamin dimers then assemble into dimeric head-to-tail polymers. Ultimately, two head-to-tail polymers assemble laterally into a protofilament with a uniformly shaped rod of 3.5 nm in diameter. In terms of processing, phosphorylation plays a key role in lamin organization, subcellular localization and nuclear envelope disintegration. Phosphorylation by CDK1 at Ser-22 at the onset of mitosis drives lamin disassembly and nuclear envelope breakdown.

The protein localises to the nucleus lamina. The protein resides in the nucleus envelope. It localises to the nucleus. Its subcellular location is the nucleoplasm. It is found in the nucleus matrix. In terms of biological role, lamins are intermediate filament proteins that assemble into a filamentous meshwork, and which constitute the major components of the nuclear lamina, a fibrous layer on the nucleoplasmic side of the inner nuclear membrane. Lamins provide a framework for the nuclear envelope, bridging the nuclear envelope and chromatin. Plays an important role in nuclear assembly, chromatin organization, nuclear membrane and telomere dynamics. The polypeptide is Lamin-B1 (LMNB1) (Gallus gallus (Chicken)).